Here is a 222-residue protein sequence, read N- to C-terminus: Tetratricopeptide repeat protein 9A (222 aa).

Disordered regions lie at residues 1–49 (MERK…AAAE) and 88–116 (KGLL…GRLS). Residues 56 to 89 (RAHEFKSQGAQCYKDKKFREAIGKYHRALLELKG) form a TPR 1 repeat. Ser105 is modified (phosphoserine). TPR repeat units lie at residues 125–160 (AIEI…LKKE) and 161–194 (GENF…RTQQ).

Belongs to the TTC9 family.

The chain is Tetratricopeptide repeat protein 9A (TTC9) from Homo sapiens (Human).